The following is a 201-amino-acid chain: Holliday junction branch migration complex subunit RuvA (201 aa).

Residues 1 to 65 form a domain I region; that stretch reads MIAYIEGRVA…EDALELYGFS (65 aa). Residues 66–143 form a domain II region; sequence GWDERQTFLV…KVESLPASAG (78 aa). A flexible linker region spans residues 143-147; it reads GLAAG. The interval 148 to 201 is domain III; sequence VPGSVLRDAVQALGNLGYAEEEAAPVLKNILKQDPDLDVSEALRAALKALAKAR.

This sequence belongs to the RuvA family. Homotetramer. Forms an RuvA(8)-RuvB(12)-Holliday junction (HJ) complex. HJ DNA is sandwiched between 2 RuvA tetramers; dsDNA enters through RuvA and exits via RuvB. An RuvB hexamer assembles on each DNA strand where it exits the tetramer. Each RuvB hexamer is contacted by two RuvA subunits (via domain III) on 2 adjacent RuvB subunits; this complex drives branch migration. In the full resolvosome a probable DNA-RuvA(4)-RuvB(12)-RuvC(2) complex forms which resolves the HJ.

The protein localises to the cytoplasm. Functionally, the RuvA-RuvB-RuvC complex processes Holliday junction (HJ) DNA during genetic recombination and DNA repair, while the RuvA-RuvB complex plays an important role in the rescue of blocked DNA replication forks via replication fork reversal (RFR). RuvA specifically binds to HJ cruciform DNA, conferring on it an open structure. The RuvB hexamer acts as an ATP-dependent pump, pulling dsDNA into and through the RuvAB complex. HJ branch migration allows RuvC to scan DNA until it finds its consensus sequence, where it cleaves and resolves the cruciform DNA. This chain is Holliday junction branch migration complex subunit RuvA, found in Oleidesulfovibrio alaskensis (strain ATCC BAA-1058 / DSM 17464 / G20) (Desulfovibrio alaskensis).